Consider the following 512-residue polypeptide: ADP,ATP carrier protein 4 (512 aa).

11 helical membrane-spanning segments follow: residues 34 to 54 (ISKF…QNLI), 71 to 91 (ISFL…VIYV), 102 to 122 (IFYL…YVIF), 157 to 177 (FSLF…LLFW), 192 to 212 (FYPL…HFLE), 231 to 251 (FHTL…IVSI), 296 to 316 (LIAT…GPWK), 330 to 350 (AAFI…FVLL), 361 to 381 (FTSA…FFAV), 390 to 410 (LIIA…IGAI), and 476 to 496 (SISI…IWAT).

Belongs to the ADP/ATP translocase tlc family.

It localises to the cell membrane. Functionally, provides the rickettsial cell with host ATP in exchange for rickettsial ADP. This is an obligate exchange system. This energy acquiring activity is an important component of rickettsial parasitism. In Rickettsia prowazekii (strain Madrid E), this protein is ADP,ATP carrier protein 4 (tlcD).